Here is a 188-residue protein sequence, read N- to C-terminus: dCTP deaminase (188 aa).

DCTP-binding positions include 111-116 (KSTYAR), 135-137 (TLE), glutamine 156, tyrosine 170, and glutamine 180. Residue glutamate 137 is the Proton donor/acceptor of the active site.

The protein belongs to the dCTP deaminase family. As to quaternary structure, homotrimer.

The catalysed reaction is dCTP + H2O + H(+) = dUTP + NH4(+). It functions in the pathway pyrimidine metabolism; dUMP biosynthesis; dUMP from dCTP (dUTP route): step 1/2. Its function is as follows. Catalyzes the deamination of dCTP to dUTP. The chain is dCTP deaminase from Neisseria gonorrhoeae (strain ATCC 700825 / FA 1090).